The following is a 512-amino-acid chain: Chromatin assembly factor 1 subunit B (512 aa).

WD repeat units follow at residues 16–56 (DDHT…SSTK), 65–105 (RHTQ…TTLA), 126–165 (SMGS…LLTQ), and 168–207 (DHSH…KNPK). Over residues 239 to 257 (DESSGISEPIETSNNNESP) the composition is skewed to polar residues. Positions 239–261 (DESSGISEPIETSNNNESPVSKH) are disordered. WD repeat units lie at residues 373–413 (SFSN…PFYR) and 417–458 (LHYS…VKSQ). A disordered region spans residues 459 to 512 (HKISLPEKRSASPSSIDDSQDNTAGGPATTTLIPRKVESSKVSKKRIAPTPVYP). Residues S468, S470, and S473 each carry the phosphoserine modification. Positions 469 to 490 (ASPSSIDDSQDNTAGGPATTTL) are enriched in polar residues.

The protein belongs to the WD repeat HIR1 family. As to quaternary structure, component of chromatin assembly factor 1 (CAF-1), composed of pcf1, pcf2 and pcf3. Interacts with pcn1/PCNA during S-phase. Interacts with swi6 at the G1/S-phase transition and early S-phase, but not in the G2 phase. The CAF-1 complex interacts with histone H3-H4 dimers.

It is found in the cytoplasm. Its subcellular location is the nucleus. Its function is as follows. Acts as a component of the histone chaperone complex chromatin assembly factor 1 (CAF-1), which assembles histone octamers onto DNA during replication and repair. CAF-1 performs the first step of the nucleosome assembly process, bringing newly synthesized histones H3 and H4 to replicating DNA; histones H2A/H2B can bind to this chromatin precursor subsequent to DNA replication to complete the histone octamer. Plays a role in the maintenance of heterochromatin. The protein is Chromatin assembly factor 1 subunit B of Schizosaccharomyces pombe (strain 972 / ATCC 24843) (Fission yeast).